The chain runs to 288 residues: Putative aryl-alcohol dehydrogenase AAD10 (288 aa).

Belongs to the aldo/keto reductase family. Aldo/keto reductase 2 subfamily.

The protein is Putative aryl-alcohol dehydrogenase AAD10 (AAD10) of Saccharomyces cerevisiae (strain ATCC 204508 / S288c) (Baker's yeast).